The following is a 213-amino-acid chain: Imidazole glycerol phosphate synthase subunit HisH 1 (213 aa).

Residues 3-213 form the Glutamine amidotransferase type-1 domain; it reads SVSIVDYGVG…LSIIQQFLQI (211 aa). Cysteine 81 functions as the Nucleophile in the catalytic mechanism. Catalysis depends on residues histidine 195 and glutamate 197.

In terms of assembly, heterodimer of HisH and HisF.

The protein localises to the cytoplasm. It carries out the reaction 5-[(5-phospho-1-deoxy-D-ribulos-1-ylimino)methylamino]-1-(5-phospho-beta-D-ribosyl)imidazole-4-carboxamide + L-glutamine = D-erythro-1-(imidazol-4-yl)glycerol 3-phosphate + 5-amino-1-(5-phospho-beta-D-ribosyl)imidazole-4-carboxamide + L-glutamate + H(+). It catalyses the reaction L-glutamine + H2O = L-glutamate + NH4(+). It participates in amino-acid biosynthesis; L-histidine biosynthesis; L-histidine from 5-phospho-alpha-D-ribose 1-diphosphate: step 5/9. IGPS catalyzes the conversion of PRFAR and glutamine to IGP, AICAR and glutamate. The HisH subunit provides the glutamine amidotransferase activity that produces the ammonia necessary to HisF for the synthesis of IGP and AICAR. The sequence is that of Imidazole glycerol phosphate synthase subunit HisH 1 from Legionella pneumophila (strain Paris).